The following is a 268-amino-acid chain: Pantothenate synthetase (268 aa).

Residue methionine 18–histidine 25 coordinates ATP. Histidine 25 serves as the catalytic Proton donor. Residue glutamine 49 participates in (R)-pantoate binding. A beta-alanine-binding site is contributed by glutamine 49. Position 135–138 (glycine 135–aspartate 138) interacts with ATP. Glutamine 141 serves as a coordination point for (R)-pantoate. ATP-binding positions include valine 164 and leucine 172–arginine 175.

The protein belongs to the pantothenate synthetase family. As to quaternary structure, homodimer.

The protein localises to the cytoplasm. It carries out the reaction (R)-pantoate + beta-alanine + ATP = (R)-pantothenate + AMP + diphosphate + H(+). The protein operates within cofactor biosynthesis; (R)-pantothenate biosynthesis; (R)-pantothenate from (R)-pantoate and beta-alanine: step 1/1. Catalyzes the condensation of pantoate with beta-alanine in an ATP-dependent reaction via a pantoyl-adenylate intermediate. This is Pantothenate synthetase from Dehalococcoides mccartyi (strain ATCC BAA-2266 / KCTC 15142 / 195) (Dehalococcoides ethenogenes (strain 195)).